Reading from the N-terminus, the 342-residue chain is N-acetyl-gamma-glutamyl-phosphate reductase (342 aa).

C147 is a catalytic residue.

The protein belongs to the NAGSA dehydrogenase family. Type 1 subfamily.

It is found in the cytoplasm. It carries out the reaction N-acetyl-L-glutamate 5-semialdehyde + phosphate + NADP(+) = N-acetyl-L-glutamyl 5-phosphate + NADPH + H(+). It participates in amino-acid biosynthesis; L-arginine biosynthesis; N(2)-acetyl-L-ornithine from L-glutamate: step 3/4. Catalyzes the NADPH-dependent reduction of N-acetyl-5-glutamyl phosphate to yield N-acetyl-L-glutamate 5-semialdehyde. This chain is N-acetyl-gamma-glutamyl-phosphate reductase, found in Campylobacter jejuni subsp. jejuni serotype O:23/36 (strain 81-176).